An 81-amino-acid polypeptide reads, in one-letter code: MRLSYISLTLAIIFVMAIVHAPETEAKAYPEADAVAEAIAVGEADAVGVADPGIKDALAKIWKILKAEVPTVAAAIENKVG.

A signal peptide spans 1–26 (MRLSYISLTLAIIFVMAIVHAPETEA). A propeptide spanning residues 27 to 52 (KAYPEADAVAEAIAVGEADAVGVADP) is cleaved from the precursor. Residue Val80 is modified to Valine amide.

Belongs to the formicidae venom precursor-01 superfamily. Expressed by the venom gland.

The protein resides in the secreted. Its function is as follows. Induces paralysis after injection into blowflies (L.caesar), and then death within 24 hours. May have antimicrobial properties, like most ant linear peptides. The polypeptide is U10-myrmicitoxin-Mri1b (Manica rubida (European giant red ant)).